The following is a 296-amino-acid chain: Glycine--tRNA ligase alpha subunit (296 aa).

It belongs to the class-II aminoacyl-tRNA synthetase family. In terms of assembly, tetramer of two alpha and two beta subunits.

The protein localises to the cytoplasm. It carries out the reaction tRNA(Gly) + glycine + ATP = glycyl-tRNA(Gly) + AMP + diphosphate. This Francisella tularensis subsp. novicida (strain U112) protein is Glycine--tRNA ligase alpha subunit.